Consider the following 981-residue polypeptide: MDTSSSSGTHPSTFNNLTKQQELTGNDPNDTNRKRIRVACDSCRRKKIKCNGSYPCGNCIQAKNTSNCHFTERPVRKKLKPTKQDNKSTANSNGVSKRKYNDTFSGNSINIKTEKQENTTFGINDNKSSDLESRLSRIENSMSRMMHTLENFSQNFMTQAIRNNHSNSSMFNNNSLSPTPSEDFNKSAFDSEEQQTSHSYKNLKDRVKDANELLKLRNWDEFVGTHSITCIFSRESLDWMEKTLGSYGEEYLTPIRNLPLVFHSELKPYIMKWIDPPVVDKLQRKKLLESPFPTDSKLISKLIDLYYEETSMINILVDESRVRSLFAAYYNNFAEPIATKRRRFKLSELLLMTSILLISLSCLTEDDFSEERITTPASSTSSNYSAASANLLGDYNKNRLIALQNSLENSAIFYYHRISVISEGLETVEALLMFIIYVESNWLTSFFNYTIITVTIRFAQEIGLHRAETYNNLDLEEATKRRKIWWFCYFFDIEFSFKSGKPPVINTNDVTTNSDEDLLRVITQLKQYGPLSPKDRMYSPVCHTISTSLLDLSGSDSICLDILKIIQSGDILDDPFYFQFCALLQSRIRSNSYHDLFIASAEKRDFSSISNTLEKLNADMFELAMYLADEAKPRFYNDPKFTSVQASTGTSIRRDTILAMKLTFFSHLMIINRYPLMIATEDSKFDDRVIKFRNLSLDSARTILMLIKGWHRESASALFYNWAIYFPVAAYLVLVAAIINHPQLPESGTNLNLLIETSLSFFKSSKQWNSSNDSQDKQQNSTICVNKIVAIELIVRLMLRVVIKVYELHNNVEILANNPALQNHLQEAEEKFPDIFQNHAEFTSKMIALVGASPFGGCGSRNTSSCNLRDNSTNHGQNNMNPSPTITNNTYNSNINTGSNSTGEPQVCYAQSPSYNASLSNIINNESTGRSPATSTSINQSMMNENYDLFNDYLIDNSAVNLPFSQFNNLPNFFFDNNLGI.

Over residues 1-29 (MDTSSSSGTHPSTFNNLTKQQELTGNDPN) the composition is skewed to polar residues. Residues 1–33 (MDTSSSSGTHPSTFNNLTKQQELTGNDPNDTNR) are disordered. Positions 40–68 (CDSCRRKKIKCNGSYPCGNCIQAKNTSNC) form a DNA-binding region, zn(2)-C6 fungal-type. Disordered stretches follow at residues 74 to 106 (PVRK…TFSG), 165 to 199 (HSNS…TSHS), and 868 to 902 (LRDN…SNST). Over residues 165-177 (HSNSSMFNNNSLS) the composition is skewed to low complexity. The segment covering 868-880 (LRDNSTNHGQNNM) has biased composition (polar residues). The span at 881 to 902 (NPSPTITNNTYNSNINTGSNST) shows a compositional bias: low complexity.

In terms of processing, phosphorylated. Phosphorylation leads to hyperactivation.

It localises to the nucleus. With respect to regulation, drugs such as farnesol and 1-dodecanol are able to hyperactivate TAC1 probably via phosphorylation by the Mediator complex. In terms of biological role, transcriptional activator of drug-responsive genes including the ABC-type transporters CDR1 and CDR2, as well as HSP12 and RTA3. Binds the cis-acting regulatory drug-responsive elements (DREs) with the consensus sequence 5'-CGGAWATCGGATATTTTTTT-3' in the promoters of target genes. The protein is Transcription factor TAC1 of Candida albicans (strain SC5314 / ATCC MYA-2876) (Yeast).